Here is a 178-residue protein sequence, read N- to C-terminus: Large ribosomal subunit protein uL6 (178 aa).

The protein belongs to the universal ribosomal protein uL6 family. As to quaternary structure, part of the 50S ribosomal subunit.

This protein binds to the 23S rRNA, and is important in its secondary structure. It is located near the subunit interface in the base of the L7/L12 stalk, and near the tRNA binding site of the peptidyltransferase center. This is Large ribosomal subunit protein uL6 from Streptococcus suis (strain 05ZYH33).